Reading from the N-terminus, the 559-residue chain is Potassium-transporting ATPase potassium-binding subunit (559 aa).

The next 13 membrane-spanning stretches (helical) occupy residues 5 to 25 (GFLL…PLGS), 27 to 47 (LARL…RILW), 63 to 83 (LLAL…LLFW), 132 to 152 (GLTV…FALI), 170 to 190 (LVRI…LFFI), 253 to 273 (LAQM…FGEA), 283 to 303 (LLWA…WAEV), 327 to 347 (FGVL…CGAV), 356 to 376 (ALGG…FGGV), 379 to 399 (GLYG…LMIG), 416 to 436 (MTAL…ALAM), 484 to 504 (LLAF…MAIA), and 524 to 544 (GALF…LTFI).

The protein belongs to the KdpA family. As to quaternary structure, the system is composed of three essential subunits: KdpA, KdpB and KdpC.

The protein resides in the cell inner membrane. Functionally, part of the high-affinity ATP-driven potassium transport (or Kdp) system, which catalyzes the hydrolysis of ATP coupled with the electrogenic transport of potassium into the cytoplasm. This subunit binds the periplasmic potassium ions and delivers the ions to the membrane domain of KdpB through an intramembrane tunnel. This is Potassium-transporting ATPase potassium-binding subunit from Salmonella newport (strain SL254).